Reading from the N-terminus, the 227-residue chain is Extracellular deoxyribonuclease (227 aa).

The N-terminal stretch at 1 to 20 (MFRPLLSFTLARLVSLPLHA) is a signal peptide.

It belongs to the EndA/NucM nuclease family.

The protein resides in the secreted. The polypeptide is Extracellular deoxyribonuclease (Aeromonas hydrophila).